An 83-amino-acid polypeptide reads, in one-letter code: Mu-theraphotoxin-Hhn2j 4 (83 aa).

The N-terminal stretch at 1–21 (MKASMFLALAGSVLLFVVGYA) is a signal peptide. The propeptide occupies 22–48 (SESEEKEFPIELLSKIFAVDVFKGEER). Cystine bridges form between Cys50–Cys65, Cys57–Cys70, and Cys64–Cys77. Position 81 is a leucine amide (Leu81).

Belongs to the neurotoxin 10 (Hwtx-1) family. 15 (Hntx-3) subfamily. In terms of assembly, monomer. In terms of tissue distribution, expressed by the venom gland.

It is found in the secreted. Functionally, lethal neurotoxin. Selectively blocks tetrodotoxin-sensitive voltage-gated sodium channels (Nav). Does not affect tetrodotoxin-resistant voltage-gated sodium channels or calcium channels. This is Mu-theraphotoxin-Hhn2j 4 from Cyriopagopus hainanus (Chinese bird spider).